Reading from the N-terminus, the 416-residue chain is Glutamyl-tRNA reductase (416 aa).

Residues threonine 49–arginine 52, serine 105, glutamate 110–glutamine 112, and glutamine 116 each bind substrate. The active-site Nucleophile is cysteine 50. Glycine 185 to isoleucine 190 contacts NADP(+).

The protein belongs to the glutamyl-tRNA reductase family. Homodimer.

The catalysed reaction is (S)-4-amino-5-oxopentanoate + tRNA(Glu) + NADP(+) = L-glutamyl-tRNA(Glu) + NADPH + H(+). Its pathway is porphyrin-containing compound metabolism; protoporphyrin-IX biosynthesis; 5-aminolevulinate from L-glutamyl-tRNA(Glu): step 1/2. Catalyzes the NADPH-dependent reduction of glutamyl-tRNA(Glu) to glutamate 1-semialdehyde (GSA). This is Glutamyl-tRNA reductase from Shewanella amazonensis (strain ATCC BAA-1098 / SB2B).